The sequence spans 118 residues: Group 1 truncated hemoglobin GlbN (118 aa).

His70 is a binding site for heme.

The protein belongs to the truncated hemoglobin family. Group I subfamily. Monomer. The cofactor is heme.

It localises to the membrane. The protein is Group 1 truncated hemoglobin GlbN (glbN) of Nostoc sp. (strain MUN 8820).